The following is a 67-amino-acid chain: MGMRMMFTMFLLVVLAITVVSFTSDHASDGRNTAANDKASKLMALRNECCDNPPCKSSNPDLCDWRS.

A signal peptide spans 1–21 (MGMRMMFTMFLLVVLAITVVS). The propeptide occupies 22-46 (FTSDHASDGRNTAANDKASKLMALR). 2 disulfide bridges follow: C49-C55 and C50-C63. The segment at 51-53 (DNP) is lacks the Ser-Xaa-Pro motif that is crucial for potent interaction with nAChR.

The protein belongs to the conotoxin A superfamily. Expressed by the venom duct.

It localises to the secreted. Functionally, alpha-conotoxins act on postsynaptic membranes, they bind to the nicotinic acetylcholine receptors (nAChR) and thus inhibit them. Has possibly a distinct nAChR binding mode from other alpha-conotoxins, due to a different three residue motif (lacks the Ser-Xaa-Pro motif). The chain is Alpha-conotoxin-like Qc1.1b from Conus quercinus (Oak cone).